Reading from the N-terminus, the 556-residue chain is MKTDIEIAQSVELKPITEVVEKVGIGFDDLELYGKYKAKLSFDKINEVKDDKPGKLILVTAINPTPAGEGKSTMSIGLADALNKIGKKTMIALREPSLGPVMGIKGGAAGGGYAQVLPMEDINLHFTGDMHAITTANNALSALLDNHIHQGNALGIDQRRIIWKRVVDLNDRALRHVTVGLGGPLNGIPREDGFDITVASEIMAILCLATDINDLKERLANIVVAYRYDRTPVYVRDLEIEGALTLILKDAIKPNLVQTIYGTPALVHGGPFANIAHGCNSVLATSTALRLADYTVTEAGFGADLGAEKFLDIKTPNLPTTPDAVVIVATLRALKMHGGVAKTDLSEENVQAVRDGFSNLKRHVENIRKFGIPAVVAINEFVADTEAEIAALKELCSEIKVPVELASVWANGADGGIDLANTVVDVVENGNADYKRLYSDDDSLEEKITKIVTEIYGGKSVIFEKKAKNQLKQFAEFGWDKLPVCMAKTQYSFSDNQFLLGAPEGFDITIREFVPKTGAGFIVALTGDVMTMPGLPKAPAALKMDVTEDGTAVGLF.

Residue 65–72 coordinates ATP; that stretch reads TPAGEGKS.

It belongs to the formate--tetrahydrofolate ligase family.

It carries out the reaction (6S)-5,6,7,8-tetrahydrofolate + formate + ATP = (6R)-10-formyltetrahydrofolate + ADP + phosphate. Its pathway is one-carbon metabolism; tetrahydrofolate interconversion. In Streptococcus thermophilus (strain ATCC BAA-491 / LMD-9), this protein is Formate--tetrahydrofolate ligase.